The following is a 313-amino-acid chain: Putative S-adenosyl-L-methionine-dependent methyltransferase MMAR_0955 (313 aa).

S-adenosyl-L-methionine is bound by residues Asp132 and 161–162; that span reads DL.

It belongs to the UPF0677 family.

Its function is as follows. Exhibits S-adenosyl-L-methionine-dependent methyltransferase activity. The chain is Putative S-adenosyl-L-methionine-dependent methyltransferase MMAR_0955 from Mycobacterium marinum (strain ATCC BAA-535 / M).